The chain runs to 131 residues: ATP synthase epsilon chain, chloroplastic (131 aa).

It belongs to the ATPase epsilon chain family. F-type ATPases have 2 components, CF(1) - the catalytic core - and CF(0) - the membrane proton channel. CF(1) has five subunits: alpha(3), beta(3), gamma(1), delta(1), epsilon(1). CF(0) has three main subunits: a, b and c.

The protein resides in the plastid. The protein localises to the chloroplast thylakoid membrane. Produces ATP from ADP in the presence of a proton gradient across the membrane. This chain is ATP synthase epsilon chain, chloroplastic, found in Oltmannsiellopsis viridis (Marine flagellate).